The chain runs to 344 residues: Heat-inducible transcription repressor hrcA (344 aa).

This sequence belongs to the HrcA family.

Negative regulator of class I heat shock genes (grpE-dnaK-dnaJ and groELS operons). Prevents heat-shock induction of these operons. This chain is Heat-inducible transcription repressor hrcA, found in Streptococcus pyogenes serotype M3 (strain ATCC BAA-595 / MGAS315).